We begin with the raw amino-acid sequence, 465 residues long: NADH-quinone oxidoreductase subunit N (465 aa).

The next 13 helical transmembrane spans lie at 9–29 (FNFVLLFPVLSLLFWAIVLLL), 44–64 (ASIIALFSTLCFLLIYNGFVL), 73–93 (LFVSDNYAIFAQIVILVFSML), 110–130 (FLFMIASLILMISSTNLIVIF), 159–179 (YFTLAAVGAGFFVFACAFVYL), 198–218 (PILLCAGVMFLVIVGVKLSIA), 235–255 (FIAFISIVPKIAMIIVVLRIF), 265–285 (EYIVALLAIFSMLAVSIVALI), 292–312 (MLAYSSITHSSFILAVIVSSM), 327–347 (IFALFVYWISFAFANYGIFLI), 371–391 (IMLAIFILCIAGIPPFGIFWG), 405–427 (YALVFAVALSSMIMLYAYLKILI), and 444–464 (VKQKIILCLCLIGSVSCVFLL).

Belongs to the complex I subunit 2 family. NDH-1 is composed of 14 different subunits. Subunits NuoA, H, J, K, L, M, N constitute the membrane sector of the complex.

The protein localises to the cell inner membrane. The catalysed reaction is a quinone + NADH + 5 H(+)(in) = a quinol + NAD(+) + 4 H(+)(out). Its function is as follows. NDH-1 shuttles electrons from NADH, via FMN and iron-sulfur (Fe-S) centers, to quinones in the respiratory chain. The immediate electron acceptor for the enzyme in this species is believed to be ubiquinone. Couples the redox reaction to proton translocation (for every two electrons transferred, four hydrogen ions are translocated across the cytoplasmic membrane), and thus conserves the redox energy in a proton gradient. This Campylobacter lari (strain RM2100 / D67 / ATCC BAA-1060) protein is NADH-quinone oxidoreductase subunit N.